The following is a 161-amino-acid chain: SsrA-binding protein (161 aa).

The interval 138 to 161 is disordered; it reads DKRTDSKEKDWNRDKARIMKSSLR. A compositionally biased stretch (basic and acidic residues) spans 139-154; it reads KRTDSKEKDWNRDKAR.

The protein belongs to the SmpB family.

The protein localises to the cytoplasm. Its function is as follows. Required for rescue of stalled ribosomes mediated by trans-translation. Binds to transfer-messenger RNA (tmRNA), required for stable association of tmRNA with ribosomes. tmRNA and SmpB together mimic tRNA shape, replacing the anticodon stem-loop with SmpB. tmRNA is encoded by the ssrA gene; the 2 termini fold to resemble tRNA(Ala) and it encodes a 'tag peptide', a short internal open reading frame. During trans-translation Ala-aminoacylated tmRNA acts like a tRNA, entering the A-site of stalled ribosomes, displacing the stalled mRNA. The ribosome then switches to translate the ORF on the tmRNA; the nascent peptide is terminated with the 'tag peptide' encoded by the tmRNA and targeted for degradation. The ribosome is freed to recommence translation, which seems to be the essential function of trans-translation. This is SsrA-binding protein from Aliivibrio fischeri (strain ATCC 700601 / ES114) (Vibrio fischeri).